The primary structure comprises 698 residues: Probable Xaa-Pro aminopeptidase P (698 aa).

Residues D509, D520, E604, and E618 each coordinate Mn(2+).

The protein belongs to the peptidase M24B family. Mn(2+) serves as cofactor.

It carries out the reaction Release of any N-terminal amino acid, including proline, that is linked to proline, even from a dipeptide or tripeptide.. Functionally, catalyzes the removal of a penultimate prolyl residue from the N-termini of peptides. The polypeptide is Probable Xaa-Pro aminopeptidase P (AMPP) (Trichophyton verrucosum (strain HKI 0517)).